Reading from the N-terminus, the 179-residue chain is Large ribosomal subunit protein uL5 (179 aa).

The protein belongs to the universal ribosomal protein uL5 family. As to quaternary structure, part of the 50S ribosomal subunit; part of the 5S rRNA/L5/L18/L25 subcomplex. Contacts the 5S rRNA and the P site tRNA. Forms a bridge to the 30S subunit in the 70S ribosome.

Functionally, this is one of the proteins that bind and probably mediate the attachment of the 5S RNA into the large ribosomal subunit, where it forms part of the central protuberance. In the 70S ribosome it contacts protein S13 of the 30S subunit (bridge B1b), connecting the 2 subunits; this bridge is implicated in subunit movement. Contacts the P site tRNA; the 5S rRNA and some of its associated proteins might help stabilize positioning of ribosome-bound tRNAs. The sequence is that of Large ribosomal subunit protein uL5 from Pseudomonas savastanoi pv. phaseolicola (strain 1448A / Race 6) (Pseudomonas syringae pv. phaseolicola (strain 1448A / Race 6)).